A 295-amino-acid polypeptide reads, in one-letter code: Porphobilinogen deaminase (295 aa).

Cysteine 241 carries the post-translational modification S-(dipyrrolylmethanemethyl)cysteine.

Belongs to the HMBS family. As to quaternary structure, monomer. The cofactor is dipyrromethane.

The enzyme catalyses 4 porphobilinogen + H2O = hydroxymethylbilane + 4 NH4(+). The protein operates within porphyrin-containing compound metabolism; protoporphyrin-IX biosynthesis; coproporphyrinogen-III from 5-aminolevulinate: step 2/4. Its function is as follows. Tetrapolymerization of the monopyrrole PBG into the hydroxymethylbilane pre-uroporphyrinogen in several discrete steps. The chain is Porphobilinogen deaminase from Lachnospira eligens (strain ATCC 27750 / DSM 3376 / VPI C15-48 / C15-B4) (Eubacterium eligens).